Reading from the N-terminus, the 280-residue chain is Small ribosomal subunit protein uS3 (280 aa).

The KH type-2 domain maps to 38–106 (IRRLLSTGLE…QVQLNILEVR (69 aa)). Residues 215–280 (AAAAPAGAER…PAAEPQSTES (66 aa)) form a disordered region. The span at 238 to 280 (SGASGTTATGTEAGRAAASADESTAAGQPAEAAPAAEPQSTES) shows a compositional bias: low complexity.

The protein belongs to the universal ribosomal protein uS3 family. As to quaternary structure, part of the 30S ribosomal subunit. Forms a tight complex with proteins S10 and S14.

Binds the lower part of the 30S subunit head. Binds mRNA in the 70S ribosome, positioning it for translation. In Mycobacterium avium (strain 104), this protein is Small ribosomal subunit protein uS3.